Reading from the N-terminus, the 632-residue chain is 1-deoxy-D-xylulose-5-phosphate synthase (632 aa).

Thiamine diphosphate is bound by residues H73 and 114–116 (SHA). D146 lines the Mg(2+) pocket. Residues 147-148 (GA), N176, Y287, and E368 each bind thiamine diphosphate. Mg(2+) is bound at residue N176.

It belongs to the transketolase family. DXPS subfamily. In terms of assembly, homodimer. Requires Mg(2+) as cofactor. Thiamine diphosphate serves as cofactor.

It catalyses the reaction D-glyceraldehyde 3-phosphate + pyruvate + H(+) = 1-deoxy-D-xylulose 5-phosphate + CO2. Its pathway is metabolic intermediate biosynthesis; 1-deoxy-D-xylulose 5-phosphate biosynthesis; 1-deoxy-D-xylulose 5-phosphate from D-glyceraldehyde 3-phosphate and pyruvate: step 1/1. Functionally, catalyzes the acyloin condensation reaction between C atoms 2 and 3 of pyruvate and glyceraldehyde 3-phosphate to yield 1-deoxy-D-xylulose-5-phosphate (DXP). The polypeptide is 1-deoxy-D-xylulose-5-phosphate synthase (Corynebacterium glutamicum (strain R)).